The following is a 664-amino-acid chain: Cyclic nucleotide-gated channel alpha-2 (664 aa).

Residues M1 to K10 are compositionally biased toward polar residues. Residues M1 to E51 are disordered. Residues M1–L146 are Cytoplasmic-facing. A helical transmembrane segment spans residues F147–D168. Residues L169–L178 lie on the Extracellular side of the membrane. The helical transmembrane segment at V179–G199 threads the bilayer. Residues F200–K224 lie on the Cytoplasmic side of the membrane. The chain crosses the membrane as a helical span at residues L225 to H243. Topologically, residues S244–R248 are extracellular. Residues F249–T267 form a helical membrane-spanning segment. Topologically, residues R268–I274 are cytoplasmic. The ion conduction pathway stretch occupies residues P272–M380. Residues F275–I298 traverse the membrane as a helical segment. At S299–Y321 the chain is on the extracellular side. 2 helical membrane-spanning segments follow: residues L322–I356 and F357–N381. Residues T339–E342 form a selectivity filter region. The tract at residues A382–Q458 is C-linker. Topologically, residues A382–E664 are cytoplasmic. The interval A462–K582 is cyclic nucleotide-binding domain. 3',5'-cyclic GMP contacts are provided by G522, S525, R538, and T539. Residues R538 and T539 each coordinate 3',5'-cyclic AMP. Residues V599–D653 are a coiled coil.

This sequence belongs to the cyclic nucleotide-gated cation channel (TC 1.A.1.5) family. CNGA2 subfamily. As to quaternary structure, the olfactory cyclic nucleotide-gated channel is an heterotetramer composed of CNGA2, CNGA4 and CNGB1b subunits with 2:1:1 stoichiometry. In terms of tissue distribution, olfactory neurons. Widely expressed in brain, enriched in deep cerebellar nuclei, olfactory bulb mitral cells and cerebellar Purkinje neurons. Expressed in olfactory sensory cilia (at protein level).

It is found in the cell projection. The protein localises to the cilium membrane. The catalysed reaction is Ca(2+)(in) = Ca(2+)(out). It carries out the reaction Na(+)(in) = Na(+)(out). It catalyses the reaction K(+)(in) = K(+)(out). The enzyme catalyses NH4(+)(in) = NH4(+)(out). The catalysed reaction is Rb(+)(in) = Rb(+)(out). It carries out the reaction Li(+)(in) = Li(+)(out). It catalyses the reaction Cs(+)(in) = Cs(+)(out). With respect to regulation, the channel activity is inhibited by L-cis diltiazem. In terms of biological role, pore-forming subunit of the olfactory cyclic nucleotide-gated channel. Operates in the cilia of olfactory sensory neurons where chemical stimulation of the odorant is converted to an electrical signal. Mediates odorant-induced cAMP-dependent Ca(2+) influx triggering neuron depolarization. The rise of intracellular Ca(2+) levels potentiates the olfactory response by activating Ca(2+)-dependent Cl(-) channels, but it also serves as a negative feedback signal to desensitize the channel for rapid adaptation to odorants. Conducts cAMP- and cGMP-gated ion currents, with permeability for monovalent and divalent cations. The sequence is that of Cyclic nucleotide-gated channel alpha-2 from Rattus norvegicus (Rat).